A 419-amino-acid chain; its full sequence is Octopressin receptor (419 aa).

Over 1-37 (MENFTEENLHPWITTTTRVYNNVTIFPQYDDELGKFE) the chain is Extracellular. Residues Asn3 and Asn22 are each glycosylated (N-linked (GlcNAc...) asparagine). The helical transmembrane segment at 38–58 (IMVLCILCFMALFGNAVVLIV) threads the bilayer. Residues 59–80 (LRIKKTTLTRMQLLIVYLSVTD) are Cytoplasmic-facing. Residues 81 to 101 (ISVALFHILPTIILKINVYFL) traverse the membrane as a helical segment. The Extracellular segment spans residues 102–108 (GDISACR). Cys107 and Cys182 form a disulfide bridge. A helical membrane pass occupies residues 109 to 129 (VYQFITVAELYASSFVLIVTA). Over 130-153 (LDRYISICHPLAAHMWTNRRVHMT) the chain is Cytoplasmic. Residues 154–174 (TALALFLALMCSLPQLDAVLV) form a helical membrane-spanning segment. Residues 175–192 (DFHGGKLCRPNLTTELAN) lie on the Extracellular side of the membrane. A glycan (N-linked (GlcNAc...) asparagine) is linked at Asn185. The chain crosses the membrane as a helical span at residues 193–213 (IAYSWWAFCSVFFVPLLLLIF). Topologically, residues 214-292 (FYGRICFVVW…VSKSKIKTIK (79 aa)) are cytoplasmic. The interval 253-274 (SQTSSENRVKNYSDARDKDSSR) is disordered. A compositionally biased stretch (basic and acidic residues) spans 259-274 (NRVKNYSDARDKDSSR). A helical membrane pass occupies residues 293–313 (LTFSVVACFIICYTPFFTVLM). At 314 to 329 (ARTYDAELSSAQTPAL) the chain is on the extracellular side. The chain crosses the membrane as a helical span at residues 330-350 (VILSLLPSLNSCTNPWIYLAF). The Cytoplasmic portion of the chain corresponds to 351 to 419 (SGKVWCRQQS…TTALMSSSPC (69 aa)).

It belongs to the G-protein coupled receptor 1 family. Vasopressin/oxytocin receptor subfamily. As to expression, present in the nervous system and peripheral tissues.

It localises to the cell membrane. Functionally, acts as a receptor for octopressin. This Octopus vulgaris (Common octopus) protein is Octopressin receptor.